The primary structure comprises 228 residues: PKHD-type hydroxylase XCV3086 (228 aa).

In terms of domain architecture, Fe2OG dioxygenase spans 78-180 (RIYPPLFNRY…RVACFFWTQS (103 aa)). Fe cation contacts are provided by His96, Asp98, and His161. Arg171 contributes to the 2-oxoglutarate binding site.

Fe(2+) is required as a cofactor. It depends on L-ascorbate as a cofactor.

The polypeptide is PKHD-type hydroxylase XCV3086 (Xanthomonas euvesicatoria pv. vesicatoria (strain 85-10) (Xanthomonas campestris pv. vesicatoria)).